A 433-amino-acid polypeptide reads, in one-letter code: UDP-N-acetylglucosamine 1-carboxyvinyltransferase (433 aa).

A phosphoenolpyruvate-binding site is contributed by 34–35 (KN). Arg-104 serves as a coordination point for UDP-N-acetyl-alpha-D-glucosamine. Cys-128 serves as the catalytic Proton donor. A 2-(S-cysteinyl)pyruvic acid O-phosphothioketal modification is found at Cys-128. 2 residues coordinate UDP-N-acetyl-alpha-D-glucosamine: Asp-320 and Ile-342.

Belongs to the EPSP synthase family. MurA subfamily.

It localises to the cytoplasm. It carries out the reaction phosphoenolpyruvate + UDP-N-acetyl-alpha-D-glucosamine = UDP-N-acetyl-3-O-(1-carboxyvinyl)-alpha-D-glucosamine + phosphate. It functions in the pathway cell wall biogenesis; peptidoglycan biosynthesis. Functionally, cell wall formation. Adds enolpyruvyl to UDP-N-acetylglucosamine. This is UDP-N-acetylglucosamine 1-carboxyvinyltransferase from Parasynechococcus marenigrum (strain WH8102).